The following is a 382-amino-acid chain: S-adenosylmethionine synthase (382 aa).

Glutamate 10 is a Mg(2+) binding site. Histidine 16 serves as a coordination point for ATP. Glutamate 44 provides a ligand contact to K(+). L-methionine contacts are provided by glutamate 57 and glutamine 100. Residues 166-168 (DTK), 234-237 (SGRF), aspartate 245, 251-252 (RK), alanine 268, lysine 272, and lysine 276 each bind ATP. Aspartate 245 contacts L-methionine. Lysine 276 is an L-methionine binding site.

Belongs to the AdoMet synthase family. Requires Mg(2+) as cofactor. The cofactor is K(+).

It carries out the reaction L-methionine + ATP + H2O = S-adenosyl-L-methionine + phosphate + diphosphate. It functions in the pathway amino-acid biosynthesis; S-adenosyl-L-methionine biosynthesis; S-adenosyl-L-methionine from L-methionine: step 1/1. Functionally, catalyzes the formation of S-adenosylmethionine from methionine and ATP. The reaction comprises two steps that are both catalyzed by the same enzyme: formation of S-adenosylmethionine (AdoMet) and triphosphate, and subsequent hydrolysis of the triphosphate. The polypeptide is S-adenosylmethionine synthase (sam1) (Schizosaccharomyces pombe (strain 972 / ATCC 24843) (Fission yeast)).